Consider the following 340-residue polypeptide: MKVTILGAGAWGTAIASQAARQQSAGDVSLWSRDPSQLLEIEKTGENQAYLPGIKLPKSIKLENDFSNAIQRLSSNDLLVIATPMSGLSQTIAQVLKLAKQPLNIIWLCKGLEPNTSLLPHQVVERENSLHNHGIKHAYGALSGPSFAHEVGAGMPCALTVASTSTSLCEIVQAAFHHGNMRIYSSDDLIGVELGGAVKNVLAIAAGIGDGLNLGLNARAAVLTRGLAEMMRLVKAVGGKSETCMGLTGVGDLILTATGDLSRNRRVGLELAAGKSLPEILANLGHVAEGVLCAAAVGDLAKRLDVEMPITAMMGDVLSGQLTPQDAVKKLMGRDPKIET.

Residues Trp11, Arg33, and Lys110 each contribute to the NADPH site. The sn-glycerol 3-phosphate site is built by Lys110, Gly144, and Ser146. Ala148 is a binding site for NADPH. Positions 199, 252, 262, 263, and 264 each coordinate sn-glycerol 3-phosphate. The Proton acceptor role is filled by Lys199. Residue Arg263 participates in NADPH binding. NADPH contacts are provided by Val287 and Glu289.

It belongs to the NAD-dependent glycerol-3-phosphate dehydrogenase family.

The protein localises to the cytoplasm. The enzyme catalyses sn-glycerol 3-phosphate + NAD(+) = dihydroxyacetone phosphate + NADH + H(+). The catalysed reaction is sn-glycerol 3-phosphate + NADP(+) = dihydroxyacetone phosphate + NADPH + H(+). It functions in the pathway membrane lipid metabolism; glycerophospholipid metabolism. Catalyzes the reduction of the glycolytic intermediate dihydroxyacetone phosphate (DHAP) to sn-glycerol 3-phosphate (G3P), the key precursor for phospholipid synthesis. The chain is Glycerol-3-phosphate dehydrogenase [NAD(P)+] from Polynucleobacter asymbioticus (strain DSM 18221 / CIP 109841 / QLW-P1DMWA-1) (Polynucleobacter necessarius subsp. asymbioticus).